A 140-amino-acid chain; its full sequence is RxLR effector protein Avh23 (140 aa).

The signal sequence occupies residues Met1–Ala21. Positions Arg54–Arg72 match the RxLR-dEER motif. One copy of the ADA2-binding IR1 repeat lies at Gln100–Asp113. An ADA2-binding IR2 repeat occupies Gln114–Ala127.

This sequence belongs to the RxLR effector family. As to quaternary structure, interacts with host histone acetyl transferase SAGA complex subunit ADA2.

Its subcellular location is the secreted. The protein localises to the host nucleus. It is found in the host cytoplasm. Its function is as follows. Effector that suppresses plant defense responses during the early stages of pathogen infection. Suppresses cell death induced by effectors and PAMPs in plant hosts. Acts as a modulator of histone acetyltransferase (HAT) in plants. Avh23 binds to the ADA2 subunit of the HAT complex SAGA and disrupts its assembly by interfering with the association of ADA2 with the catalytic subunit GCN5. As such, Avh23 suppresses H3K9 acetylation mediated by the ADA2/GCN5 module and increases plant susceptibility. This is RxLR effector protein Avh23 from Phytophthora sojae (Soybean stem and root rot agent).